We begin with the raw amino-acid sequence, 453 residues long: Ribulose bisphosphate carboxylase large chain (453 aa).

A propeptide spanning residues 1–2 (MS) is cleaved from the precursor. Pro3 carries the post-translational modification N-acetylproline. N6,N6,N6-trimethyllysine is present on Lys14. Substrate contacts are provided by Asn123 and Thr173. Catalysis depends on Lys175, which acts as the Proton acceptor. Lys177 contacts substrate. 3 residues coordinate Mg(2+): Lys201, Asp203, and Glu204. Lys201 is modified (N6-carboxylysine). His294 acts as the Proton acceptor in catalysis. Substrate contacts are provided by Arg295, His327, and Ser379.

This sequence belongs to the RuBisCO large chain family. Type I subfamily. In terms of assembly, heterohexadecamer of 8 large chains and 8 small chains; disulfide-linked. The disulfide link is formed within the large subunit homodimers. Mg(2+) is required as a cofactor. The disulfide bond which can form in the large chain dimeric partners within the hexadecamer appears to be associated with oxidative stress and protein turnover.

The protein localises to the plastid. It localises to the chloroplast. It carries out the reaction 2 (2R)-3-phosphoglycerate + 2 H(+) = D-ribulose 1,5-bisphosphate + CO2 + H2O. It catalyses the reaction D-ribulose 1,5-bisphosphate + O2 = 2-phosphoglycolate + (2R)-3-phosphoglycerate + 2 H(+). Its function is as follows. RuBisCO catalyzes two reactions: the carboxylation of D-ribulose 1,5-bisphosphate, the primary event in carbon dioxide fixation, as well as the oxidative fragmentation of the pentose substrate in the photorespiration process. Both reactions occur simultaneously and in competition at the same active site. The chain is Ribulose bisphosphate carboxylase large chain from Galium lucidum.